The chain runs to 126 residues: Protein HEAT-INDUCED TAS1 TARGET 3 (126 aa).

It belongs to the heat induced plant HTT protein family. As to expression, expressed in seedlings, leaves, stems, inflorescences and siliques.

It localises to the cytoplasm. It is found in the nucleus. In terms of biological role, mediates both basal and acquired thermotolerance. In Arabidopsis thaliana (Mouse-ear cress), this protein is Protein HEAT-INDUCED TAS1 TARGET 3.